Consider the following 609-residue polypeptide: Mitochondrial nucleoid-associated protein 1 (609 aa).

The Mitochondrial matrix portion of the chain corresponds to 1–552 (MSDNPPRMEV…IRCNTTIRKS (552 aa)). Disordered stretches follow at residues 142–168 (ASEK…NPSE), 183–202 (SNQD…TTSG), and 410–441 (QLSL…HTPQ). Positions 146 to 161 (TSPKRELAKDLPKSGE) are enriched in basic and acidic residues. Polar residues predominate over residues 418–441 (DSQFQASHTGCQSPLCSAQRHTPQ). Residues 553 to 573 (GFGGITMLFTGYFVLCCSWSF) form a helical membrane-spanning segment. Over 574 to 609 (RRLKKLCRPLPWKSTVPPCIGVAKTTGDCRSKTCLD) the chain is Mitochondrial intermembrane.

It is found in the mitochondrion inner membrane. The protein localises to the mitochondrion matrix. Its subcellular location is the mitochondrion nucleoid. Critical regulator of mitochondrial DNA (mtDNA) abundance. Binds dsDNA throughout the mitochondrial genome without sequence specificity and controls mtDNA copy number by promoting its replication. Also plays important roles in mitochondrial metabolism and cell proliferation. In Homo sapiens (Human), this protein is Mitochondrial nucleoid-associated protein 1.